We begin with the raw amino-acid sequence, 283 residues long: Eukaryotic translation initiation factor 3 subunit K (283 aa).

One can recognise a PCI domain in the interval Tyr-52–Glu-263. The disordered stretch occupies residues Glu-114–Val-135.

The protein belongs to the eIF-3 subunit K family. In terms of assembly, component of the eukaryotic translation initiation factor 3 (eIF-3) complex.

Its subcellular location is the cytoplasm. In terms of biological role, component of the eukaryotic translation initiation factor 3 (eIF-3) complex, which is involved in protein synthesis of a specialized repertoire of mRNAs and, together with other initiation factors, stimulates binding of mRNA and methionyl-tRNAi to the 40S ribosome. The eIF-3 complex specifically targets and initiates translation of a subset of mRNAs involved in cell proliferation. This chain is Eukaryotic translation initiation factor 3 subunit K, found in Mycosarcoma maydis (Corn smut fungus).